Consider the following 345-residue polypeptide: Achaete-scute complex protein T4 (345 aa).

Residues 78–92 (SESVSSLSPGSSPAP) are compositionally biased toward low complexity. The disordered stretch occupies residues 78 to 109 (SESVSSLSPGSSPAPYNVDQSQSVQRRNARER). Positions 99-162 (QSVQRRNARE…RIAVEYIRRL (64 aa)) constitute a bHLH domain.

Efficient DNA binding requires dimerization with another bHLH protein. Interacts with da (via bHLH motif). Interacts with Bap60. As to expression, l(1)SC, SC and AC strongly label the presumptive stomatogastric nervous system, while ASE is more prominent in the presumptive procephalic lobe. Associates with the somatic nuclei through nuclear cycles 9 and 10. During nuclear cycle 11 distributes uniformly in the embryo.

Functionally, AS-C proteins are involved in the determination of the neuronal precursors in the peripheral nervous system and the central nervous system. Also involved in sex determination and dosage compensation. The sequence is that of Achaete-scute complex protein T4 (sc) from Drosophila melanogaster (Fruit fly).